A 417-amino-acid polypeptide reads, in one-letter code: Serine hydroxymethyltransferase (417 aa).

Residues leucine 121 and 125 to 127 (GHL) each bind (6S)-5,6,7,8-tetrahydrofolate. Position 229 is an N6-(pyridoxal phosphate)lysine (lysine 229). (6S)-5,6,7,8-tetrahydrofolate is bound at residue 354–356 (SPF).

The protein belongs to the SHMT family. Homodimer. Pyridoxal 5'-phosphate is required as a cofactor.

It is found in the cytoplasm. The catalysed reaction is (6R)-5,10-methylene-5,6,7,8-tetrahydrofolate + glycine + H2O = (6S)-5,6,7,8-tetrahydrofolate + L-serine. It participates in one-carbon metabolism; tetrahydrofolate interconversion. Its pathway is amino-acid biosynthesis; glycine biosynthesis; glycine from L-serine: step 1/1. In terms of biological role, catalyzes the reversible interconversion of serine and glycine with tetrahydrofolate (THF) serving as the one-carbon carrier. This reaction serves as the major source of one-carbon groups required for the biosynthesis of purines, thymidylate, methionine, and other important biomolecules. Also exhibits THF-independent aldolase activity toward beta-hydroxyamino acids, producing glycine and aldehydes, via a retro-aldol mechanism. This chain is Serine hydroxymethyltransferase, found in Azotobacter vinelandii (strain DJ / ATCC BAA-1303).